The following is a 531-amino-acid chain: Arginine--tRNA ligase (531 aa).

The 'HIGH' region signature appears at 113–123 (ANPTGPLHIGH).

This sequence belongs to the class-I aminoacyl-tRNA synthetase family. Monomer.

It is found in the cytoplasm. It carries out the reaction tRNA(Arg) + L-arginine + ATP = L-arginyl-tRNA(Arg) + AMP + diphosphate. This chain is Arginine--tRNA ligase, found in Campylobacter lari (strain RM2100 / D67 / ATCC BAA-1060).